The primary structure comprises 363 residues: UDP-N-acetylglucosamine--N-acetylmuramyl-(pentapeptide) pyrophosphoryl-undecaprenol N-acetylglucosamine transferase (363 aa).

UDP-N-acetyl-alpha-D-glucosamine is bound by residues 15–17 (TGG), Asn127, Arg163, Ser191, Ile244, 263–268 (ALTVSE), and Gln288.

Belongs to the glycosyltransferase 28 family. MurG subfamily.

The protein localises to the cell inner membrane. The enzyme catalyses di-trans,octa-cis-undecaprenyl diphospho-N-acetyl-alpha-D-muramoyl-L-alanyl-D-glutamyl-meso-2,6-diaminopimeloyl-D-alanyl-D-alanine + UDP-N-acetyl-alpha-D-glucosamine = di-trans,octa-cis-undecaprenyl diphospho-[N-acetyl-alpha-D-glucosaminyl-(1-&gt;4)]-N-acetyl-alpha-D-muramoyl-L-alanyl-D-glutamyl-meso-2,6-diaminopimeloyl-D-alanyl-D-alanine + UDP + H(+). It functions in the pathway cell wall biogenesis; peptidoglycan biosynthesis. Its function is as follows. Cell wall formation. Catalyzes the transfer of a GlcNAc subunit on undecaprenyl-pyrophosphoryl-MurNAc-pentapeptide (lipid intermediate I) to form undecaprenyl-pyrophosphoryl-MurNAc-(pentapeptide)GlcNAc (lipid intermediate II). This Pectobacterium carotovorum subsp. carotovorum (strain PC1) protein is UDP-N-acetylglucosamine--N-acetylmuramyl-(pentapeptide) pyrophosphoryl-undecaprenol N-acetylglucosamine transferase.